The sequence spans 410 residues: MKQELIERFTRYVKIDTQSNEDSHTVPTTPGQIEFGKLLVEELKEVGLTEVTMDDNGYVMATLPANTDKDVPVIGFLAHLDTATDFTGKNVKPQIHENFDGNAITLNEELNVVLTPEQFPELPSYKGHTIITTDGTTLLGADDKAGLTEIMVAMNYLIHNPQIKHGKVRVAFTPDEEIGRGPAHFDVEAFGASFAYTMDGGPLGGLEYESFNAAGAKLTFNGTNTHPGTAKNKMRNATKLAMEFNGHLPVEEAPEYTEGYEGFYHLLSLNGDVEQSKAYYIIRDFDRKNFEARKNTIENIVKQMQEKYGQDAVVLEMNDQYYNMLEKIEPVREIVDIAYEAMKSLNIEPNIHPIRGGTDGSQLSYMGLPTPNIFTGGENYHGKFEYVSVDVMEKAVQVIIEIARRFEEQA.

Residue His-79 participates in Zn(2+) binding. The active site involves Asp-81. Position 142 (Asp-142) interacts with Zn(2+). Glu-176 acts as the Proton acceptor in catalysis. Positions 177, 199, and 381 each coordinate Zn(2+).

The protein belongs to the peptidase M20B family. Zn(2+) serves as cofactor.

Its subcellular location is the cytoplasm. The enzyme catalyses Release of the N-terminal residue from a tripeptide.. In terms of biological role, cleaves the N-terminal amino acid of tripeptides. This chain is Peptidase T, found in Bacillus thuringiensis subsp. konkukian (strain 97-27).